Consider the following 295-residue polypeptide: Protease HtpX (295 aa).

The next 2 membrane-spanning stretches (helical) occupy residues 4–24 (ILLF…TLSL) and 42–62 (QLLV…LFIS). H147 contacts Zn(2+). Residue E148 is part of the active site. H151 provides a ligand contact to Zn(2+). The next 2 helical transmembrane spans lie at 158–178 (VTLA…ARII) and 195–215 (IAYF…ASAI). Residue E224 coordinates Zn(2+).

It belongs to the peptidase M48B family. Zn(2+) is required as a cofactor.

The protein localises to the cell inner membrane. This is Protease HtpX from Pseudomonas fluorescens (strain SBW25).